We begin with the raw amino-acid sequence, 154 residues long: Ribosomal RNA large subunit methyltransferase H (154 aa).

2 residues coordinate S-adenosyl-L-methionine: leucine 70 and glycine 102.

It belongs to the RNA methyltransferase RlmH family. Homodimer.

The protein localises to the cytoplasm. The catalysed reaction is pseudouridine(1915) in 23S rRNA + S-adenosyl-L-methionine = N(3)-methylpseudouridine(1915) in 23S rRNA + S-adenosyl-L-homocysteine + H(+). Functionally, specifically methylates the pseudouridine at position 1915 (m3Psi1915) in 23S rRNA. This Hyphomonas neptunium (strain ATCC 15444) protein is Ribosomal RNA large subunit methyltransferase H.